The primary structure comprises 418 residues: MALAKKTIKKVVLAYSGGLDTSAIIPWLKENYDGCEVIAFCADVGQGDEELEGVKEKAIASGASECYVVDLKEEYVKEYIYPILKTGSVYEGQYLLGTSMARPIIAKAHIEVALKVGADAVCHGCTGKGNDQVRFESCFAALAPELTVIAPWREWDMVSREDLLDYLAERNIPCAASLTKIYSRDANAWHISHEGGELEDPWCEPSKEVWTMTVDPMDAPDVPEKVQLSFKEGELVGIDGKDFSQHGAGAYEALMYLNEKGSAHGVGRIDIVENRLVGMKSRGCYETPGGTILMAAYKGLETLILDKESLKYRESVGLEFSHVIYDGRWFTPLAKAQLASAASFAEKLTGDVVVKLYKGMAQVIQRRSPNSLYSEAFATFGADDVYDQKHAEGFIRLFSLSSRITALSQKDSLKDKAE.

Residues 14–22 and Ala-42 contribute to the ATP site; that span reads AYSGGLDTS. 2 residues coordinate L-citrulline: Tyr-94 and Ser-99. Gly-124 provides a ligand contact to ATP. L-aspartate-binding residues include Thr-126, Asn-130, and Asp-131. Asn-130 contacts L-citrulline. L-citrulline-binding residues include Arg-134, Ser-183, Ser-192, Glu-273, and Tyr-285.

Belongs to the argininosuccinate synthase family. Type 1 subfamily. As to quaternary structure, homotetramer.

Its subcellular location is the cytoplasm. It carries out the reaction L-citrulline + L-aspartate + ATP = 2-(N(omega)-L-arginino)succinate + AMP + diphosphate + H(+). It participates in amino-acid biosynthesis; L-arginine biosynthesis; L-arginine from L-ornithine and carbamoyl phosphate: step 2/3. This Colwellia psychrerythraea (strain 34H / ATCC BAA-681) (Vibrio psychroerythus) protein is Argininosuccinate synthase.